A 292-amino-acid polypeptide reads, in one-letter code: Nitrogenase iron protein 2 (292 aa).

12–19 (GKGGIGKS) provides a ligand contact to ATP. C97 is a binding site for [4Fe-4S] cluster. ADP-ribosylarginine; by dinitrogenase reductase ADP-ribosyltransferase is present on R100. C133 contributes to the [4Fe-4S] cluster binding site.

Belongs to the NifH/BchL/ChlL family. Homodimer. The cofactor is [4Fe-4S] cluster. In terms of processing, the reversible ADP-ribosylation of Arg-100 inactivates the nitrogenase reductase and regulates nitrogenase activity.

The enzyme catalyses N2 + 8 reduced [2Fe-2S]-[ferredoxin] + 16 ATP + 16 H2O = H2 + 8 oxidized [2Fe-2S]-[ferredoxin] + 2 NH4(+) + 16 ADP + 16 phosphate + 6 H(+). The key enzymatic reactions in nitrogen fixation are catalyzed by the nitrogenase complex, which has 2 components: the iron protein and the molybdenum-iron protein. The protein is Nitrogenase iron protein 2 (nifH2) of Paenibacillus durus (Paenibacillus azotofixans).